We begin with the raw amino-acid sequence, 299 residues long: Oxygen-dependent coproporphyrinogen-III oxidase (299 aa).

Ser-92 provides a ligand contact to substrate. Residues His-96 and His-106 each coordinate a divalent metal cation. His-106 acts as the Proton donor in catalysis. 108–110 (NVR) serves as a coordination point for substrate. Residues His-145 and His-175 each contribute to the a divalent metal cation site. An important for dimerization region spans residues 239 to 274 (YVEFNLVYDRGTLFGLQSGGRAESILMSLPPQVRWE). 257-259 (GGR) contributes to the substrate binding site.

The protein belongs to the aerobic coproporphyrinogen-III oxidase family. As to quaternary structure, homodimer. It depends on a divalent metal cation as a cofactor.

The protein localises to the cytoplasm. It catalyses the reaction coproporphyrinogen III + O2 + 2 H(+) = protoporphyrinogen IX + 2 CO2 + 2 H2O. Its pathway is porphyrin-containing compound metabolism; protoporphyrin-IX biosynthesis; protoporphyrinogen-IX from coproporphyrinogen-III (O2 route): step 1/1. Functionally, involved in the heme biosynthesis. Catalyzes the aerobic oxidative decarboxylation of propionate groups of rings A and B of coproporphyrinogen-III to yield the vinyl groups in protoporphyrinogen-IX. The chain is Oxygen-dependent coproporphyrinogen-III oxidase from Xanthomonas campestris pv. campestris (strain B100).